We begin with the raw amino-acid sequence, 172 residues long: Keratin, high-sulfur matrix protein, B2A (172 aa).

Alanine 2 bears the N-acetylalanine mark. 5 consecutive repeats follow at residues 27–36 (PTCCQTSCCQ), 37–46 (PTSIQTSCCQ), 47–56 (PISIQTSCCQ), 57–66 (PTSIQTSCCQ), and 67–76 (PTCLQTSGCE).

The keratin products of mammalian epidermal derivatives such as wool and hair consist of microfibrils embedded in a rigid matrix of other proteins. The matrix proteins include the high-sulfur and high-tyrosine keratins, having molecular weights of 6-20 kDa, whereas the microfibrils contain the larger, low-sulfur keratins (40-56 kDa). The polypeptide is Keratin, high-sulfur matrix protein, B2A (Ovis aries (Sheep)).